A 676-amino-acid polypeptide reads, in one-letter code: Electrogenic aspartate/glutamate antiporter SLC25A13, mitochondrial (676 aa).

The residue at position 2 (A2) is an N-acetylalanine. The interval 2 to 295 (AAAKVALTKR…TLADIERIAP (294 aa)) is regulatory N-terminal domain. The Mitochondrial intermembrane portion of the chain corresponds to 2–332 (AAAKVALTKR…LLQLAESAYR (331 aa)). EF-hand domains follow at residues 51–86 (SQPN…SVLC), 87–122 (APDA…TTIH), 125–157 (IPFN…FLLE), and 158–193 (IQLE…IRPH). Ca(2+) contacts are provided by D66, T68, D70, L72, and E77. A linker loop domain region spans residues 296–312 (LEEGMLPFNLAEAQRQQ). The interval 322–613 (FLLQLAESAY…LQRWFYVDFG (292 aa)) is carrier domain. Solcar repeat units lie at residues 327-419 (AESA…VRDK), 427-511 (VPLL…VKAS), and 519-607 (VSPG…LQRW). Residues 333-350 (FGLGSIAGAVGATAVYPI) form a helical membrane-spanning segment. Residues 351 to 393 (DLVKTRMQNQRSTGSFVGELMYKNSFDCFKKVLRYEGFFGLYR) are Mitochondrial matrix-facing. N6-acetyllysine occurs at positions 354 and 373. A helical transmembrane segment spans residues 394–413 (GLLPQLLGVAPEKAIKLTVN). The Mitochondrial intermembrane segment spans residues 414–436 (DFVRDKFMHKDGSVPLLAEIFAG). A helical transmembrane segment spans residues 437–450 (GCAGGSQVIFTNPL). Residues 451-485 (EIVKIRLQVAGEITTGPRVSALSVVRDLGFFGIYK) lie on the Mitochondrial matrix side of the membrane. N6-methyllysine is present on K454. Position 485 is an N6-acetyllysine; alternate (K485). K485 is modified (N6-succinyllysine; alternate). The helical transmembrane segment at 486 to 505 (GAKACFLRDIPFSAIYFPCY) threads the bilayer. At 506–524 (AHVKASFANEDGQVSPGSL) the chain is on the mitochondrial intermembrane side. The helical transmembrane segment at 525-542 (LLAGAIAGMPAASLVTPA) threads the bilayer. Over 543-581 (DVIKTRLQVAARAGQTTYSGVTDCFRKILREEGPKALWK) the chain is Mitochondrial matrix. N6-succinyllysine is present on K581. Residues 582-601 (GAGARVFRSSPQFGVTLLTY) traverse the membrane as a helical segment. The Mitochondrial intermembrane segment spans residues 602-676 (ELLQRWFYVD…STSKVTAVGS (75 aa)). A C-terminal domain region spans residues 614-676 (GVKPVGSELV…STSKVTAVGS (63 aa)). An N6-acetyllysine modification is found at K663. At S667 the chain carries Phosphoserine.

The protein belongs to the mitochondrial carrier (TC 2.A.29) family. As to quaternary structure, homodimer (via N-terminus).

Its subcellular location is the mitochondrion inner membrane. The enzyme catalyses L-aspartate(in) + L-glutamate(out) + H(+)(out) = L-aspartate(out) + L-glutamate(in) + H(+)(in). It catalyses the reaction 3-sulfino-L-alanine(out) + L-glutamate(in) + H(+)(in) = 3-sulfino-L-alanine(in) + L-glutamate(out) + H(+)(out). It carries out the reaction 3-sulfino-L-alanine(out) + L-aspartate(in) = 3-sulfino-L-alanine(in) + L-aspartate(out). Its activity is regulated as follows. L-aspartate and 3-sulfino-L-alanine uptake are both inhibited by glisoxepide. In terms of biological role, mitochondrial electrogenic aspartate/glutamate antiporter that favors efflux of aspartate and entry of glutamate and proton within the mitochondria as part of the malate-aspartate shuttle. Also mediates the uptake of L-cysteinesulfinate (3-sulfino-L-alanine) by mitochondria in exchange of L-glutamate and proton. Can also exchange L-cysteinesulfinate with aspartate in their anionic form without any proton translocation. Lacks transport activity towards gamma-aminobutyric acid (GABA). The chain is Electrogenic aspartate/glutamate antiporter SLC25A13, mitochondrial from Rattus norvegicus (Rat).